Here is a 183-residue protein sequence, read N- to C-terminus: Translation initiation factor IF-3 (183 aa).

This sequence belongs to the IF-3 family. As to quaternary structure, monomer.

The protein localises to the cytoplasm. Functionally, IF-3 binds to the 30S ribosomal subunit and shifts the equilibrium between 70S ribosomes and their 50S and 30S subunits in favor of the free subunits, thus enhancing the availability of 30S subunits on which protein synthesis initiation begins. The sequence is that of Translation initiation factor IF-3 from Pseudomonas fluorescens (strain SBW25).